An 80-amino-acid chain; its full sequence is Centromere protein X (80 aa).

It belongs to the CENP-X/MHF2 family. Heterodimer with CENPX, sometimes called MHF; this interaction stabilizes both partners. MHF heterodimers can assemble to form tetrameric structures. MHF also coassemble with CENPT-CENPW heterodimers at centromeres to form the tetrameric CENP-T-W-S-X complex. Forms a discrete complex with FANCM and CENPX, called FANCM-MHF; this interaction, probably mediated by direct binding between CENPS and FANCM, leads to synergistic activation of double-stranded DNA binding and strongly stimulates FANCM-mediated DNA remodeling. Recruited by FANCM to the Fanconi anemia (FA) core complex, which consists of CENPS, CENPX, FANCA, FANCB, FANCC, FANCE, FANCF, FANCG, FANCL, FANCM, FAAP24 and FAAP100. The FA core complex associates with Bloom syndrome (BLM) complex, which consists of at least BLM, DNA topoisomerase 3-alpha (TOP3A), RMI1/BLAP75, RPA1/RPA70 and RPA2/RPA32. The super complex between FA and BLM is called BRAFT.

It is found in the nucleus. Its subcellular location is the chromosome. The protein localises to the centromere. The protein resides in the kinetochore. In terms of biological role, DNA-binding component of the Fanconi anemia (FA) core complex. Required for the normal activation of the FA pathway, leading to monoubiquitination of the FANCI-FANCD2 complex in response to DNA damage, cellular resistance to DNA cross-linking drugs, and prevention of chromosomal breakage. In complex with CENPS (MHF heterodimer), crucial cofactor for FANCM in both binding and ATP-dependent remodeling of DNA. Stabilizes FANCM. In complex with CENPS and FANCM (but not other FANC proteins), rapidly recruited to blocked forks and promotes gene conversion at blocked replication forks. In complex with CENPS, CENPT and CENPW (CENP-T-W-S-X heterotetramer), involved in the formation of a functional kinetochore outer plate, which is essential for kinetochore-microtubule attachment and faithful mitotic progression. As a component of MHF and CENP-T-W-S-X complexes, binds DNA and bends it to form a nucleosome-like structure. DNA-binding function is fulfilled in the presence of CENPS, with the following preference for DNA substates: Holliday junction &gt; double-stranded &gt; splay arm &gt; single-stranded. Does not bind DNA on its own. This Gallus gallus (Chicken) protein is Centromere protein X (CENPX).